The following is a 601-amino-acid chain: 1-deoxy-D-xylulose-5-phosphate synthase (601 aa).

Thiamine diphosphate contacts are provided by residues His63 and 104–106 (GHS). Asp135 contacts Mg(2+). Residues 136–137 (GS), Asn164, Tyr272, and Glu353 contribute to the thiamine diphosphate site. Asn164 lines the Mg(2+) pocket.

This sequence belongs to the transketolase family. DXPS subfamily. Homodimer. Requires Mg(2+) as cofactor. The cofactor is thiamine diphosphate.

The enzyme catalyses D-glyceraldehyde 3-phosphate + pyruvate + H(+) = 1-deoxy-D-xylulose 5-phosphate + CO2. The protein operates within metabolic intermediate biosynthesis; 1-deoxy-D-xylulose 5-phosphate biosynthesis; 1-deoxy-D-xylulose 5-phosphate from D-glyceraldehyde 3-phosphate and pyruvate: step 1/1. Functionally, catalyzes the acyloin condensation reaction between C atoms 2 and 3 of pyruvate and glyceraldehyde 3-phosphate to yield 1-deoxy-D-xylulose-5-phosphate (DXP). This is 1-deoxy-D-xylulose-5-phosphate synthase from Aliarcobacter butzleri (strain RM4018) (Arcobacter butzleri).